The primary structure comprises 110 residues: MKYLAAYLLLVQGGNAAPSAADIKAVVESVGAEVDEARINELLSSLEGKGSLEEIIAEGQKKFATVPTGGASSAAAGAAGAAAGGDAAEEEKEEEAKEESDDDMGFGLFD.

Phosphoserine is present on serine 29. Lysine 49 is covalently cross-linked (Glycyl lysine isopeptide (Lys-Gly) (interchain with G-Cter in ubiquitin)). The interval 66-110 (VPTGGASSAAAGAAGAAAGGDAAEEEKEEEAKEESDDDMGFGLFD) is disordered. Over residues 69 to 86 (GGASSAAAGAAGAAAGGD) the composition is skewed to low complexity. The segment covering 87–104 (AAEEEKEEEAKEESDDDM) has biased composition (acidic residues). Serine 100 bears the Phosphoserine mark.

This sequence belongs to the eukaryotic ribosomal protein P1/P2 family. Component of the large ribosomal subunit (LSU). Mature yeast ribosomes consist of a small (40S) and a large (60S) subunit. The 40S small subunit contains 1 molecule of ribosomal RNA (18S rRNA) and 33 different proteins (encoded by 57 genes). The large 60S subunit contains 3 rRNA molecules (25S, 5.8S and 5S rRNA) and 46 different proteins (encoded by 81 genes). The 5 acidic ribosomal P-proteins form the stalk structure of the 60S subunit. They are organized as a pentameric complex in which uL10/P0 interacts with 2 heterodimers, P1A-P2B and P1B-P2A. The N-terminus is not modified.

Its subcellular location is the cytoplasm. In terms of biological role, component of the ribosome, a large ribonucleoprotein complex responsible for the synthesis of proteins in the cell. The small ribosomal subunit (SSU) binds messenger RNAs (mRNAs) and translates the encoded message by selecting cognate aminoacyl-transfer RNA (tRNA) molecules. The large subunit (LSU) contains the ribosomal catalytic site termed the peptidyl transferase center (PTC), which catalyzes the formation of peptide bonds, thereby polymerizing the amino acids delivered by tRNAs into a polypeptide chain. The nascent polypeptides leave the ribosome through a tunnel in the LSU and interact with protein factors that function in enzymatic processing, targeting, and the membrane insertion of nascent chains at the exit of the ribosomal tunnel. This chain is Large ribosomal subunit protein P2B, found in Saccharomyces cerevisiae (strain ATCC 204508 / S288c) (Baker's yeast).